Reading from the N-terminus, the 292-residue chain is MYSYKKISYQMEEVMSMIFHGMKLVKSLESSLPEKPPESLLTSLDEIVKTFSDANERLKMLLEIKNSETALNKTKPVIVSVANQMLMQMEPGLMQEYWLRYGGSTSSQGTEAMFQTQLMAVDGGGERNLTAAVERSGASGSSTPRQRRRKDEGEEQTVLVAALRTGNTDLPPDDNHTWRKYGQKEILGSRFPRAYYRCTHQKLYNCPAKKQVQRLNDDPFTFRVTYRGSHTCYNSTAPTASSATPSTIPISSVTTGHSVDYGLAVVDMADVMFGSGGVGTNMDFIFPKNDPS.

The tract at residues 133–155 (VERSGASGSSTPRQRRRKDEGEE) is disordered. Residues 167-235 (NTDLPPDDNH…YRGSHTCYNS (69 aa)) constitute a DNA-binding region (WRKY).

The protein belongs to the WRKY group III family.

The protein localises to the nucleus. Transcription factor. Interacts specifically with the W box (5'-(T)TGAC[CT]-3'), a frequently occurring elicitor-responsive cis-acting element. In Arabidopsis thaliana (Mouse-ear cress), this protein is WRKY transcription factor 55 (WRKY55).